Here is a 168-residue protein sequence, read N- to C-terminus: Photosystem I assembly protein Ycf3 (168 aa).

TPR repeat units follow at residues 35–68 (AFTYYRDGMSAQSEGNYAEALQNYYEATRPEIDP), 72–105 (SYILYNIGLIHTSNGEHTKALEYYFRALERNPFL), and 120–153 (GEQAILQGDSEIAEAWSDQAAEYWKQAIALTPGN).

The protein belongs to the Ycf3 family.

The protein resides in the plastid. Its subcellular location is the chloroplast thylakoid membrane. Functionally, essential for the assembly of the photosystem I (PSI) complex. May act as a chaperone-like factor to guide the assembly of the PSI subunits. The chain is Photosystem I assembly protein Ycf3 from Lemna minor (Common duckweed).